Here is a 556-residue protein sequence, read N- to C-terminus: Oxygen-dependent choline dehydrogenase (556 aa).

4–33 (DYIIIGAGSAGNVLATRLTEDPNTSVLLLE) lines the FAD pocket. The active-site Proton acceptor is the histidine 473.

It belongs to the GMC oxidoreductase family. The cofactor is FAD.

The enzyme catalyses choline + A = betaine aldehyde + AH2. It catalyses the reaction betaine aldehyde + NAD(+) + H2O = glycine betaine + NADH + 2 H(+). Its pathway is amine and polyamine biosynthesis; betaine biosynthesis via choline pathway; betaine aldehyde from choline (cytochrome c reductase route): step 1/1. In terms of biological role, involved in the biosynthesis of the osmoprotectant glycine betaine. Catalyzes the oxidation of choline to betaine aldehyde and betaine aldehyde to glycine betaine at the same rate. The protein is Oxygen-dependent choline dehydrogenase of Shigella flexneri serotype 5b (strain 8401).